Consider the following 89-residue polypeptide: uncharacterized protein (89 aa).

A topological domain (cytoplasmic) is located at residue methionine 1. The chain crosses the membrane as a helical span at residues 2–22 (LFEIIYIVSSLFYIVSIIYTL). Over 23–89 (MRIKHINTVA…ELKKSKLCEG (67 aa)) the chain is Extracellular.

It localises to the host membrane. This is an uncharacterized protein from Sulfolobus islandicus filamentous virus (isolate Iceland/Hveragerdi) (SIFV).